The sequence spans 642 residues: 5-aminolevulinate synthase, non-specific, mitochondrial (642 aa).

Residues 1 to 56 (METVVRRCPFLSRVPQAFLQKAGKSLLFYAQNCPKMMEVGAKPAPRTVSTSAAQCQ) constitute a mitochondrion transit peptide. Residues 51 to 109 (SAAQCQQVKETPPANEKEKTAKAAVQQAPDESQMAQTPDGTQLPPGHPSPSTSQSSGSK) are disordered. The span at 79–90 (PDESQMAQTPDG) shows a compositional bias: polar residues. Residues 99–108 (SPSTSQSSGS) are compositionally biased toward low complexity. Substrate is bound by residues arginine 219, serine 336, and lysine 355. Serine 388, histidine 416, and threonine 444 together coordinate pyridoxal 5'-phosphate. Lysine 447 is an active-site residue. Lysine 447 is subject to N6-(pyridoxal phosphate)lysine. Residues threonine 476 and threonine 477 each coordinate pyridoxal 5'-phosphate. Threonine 564 serves as a coordination point for substrate. Proline 578 is subject to Hydroxyproline.

This sequence belongs to the class-II pyridoxal-phosphate-dependent aminotransferase family. As to quaternary structure, homodimer. Interacts (hydroxylated form) with VHL. The cofactor is pyridoxal 5'-phosphate. In terms of processing, in normoxia, is hydroxylated at Pro-578, promoting interaction with VHL, initiating ubiquitination and subsequent degradation via the proteasome. Post-translationally, ubiquitinated; in normoxia following hydroxylation and interaction with VHL, leading to its subsequent degradation via the proteasome. As to expression, expressed in the liver, kidney, brain and testis.

It localises to the mitochondrion inner membrane. The enzyme catalyses succinyl-CoA + glycine + H(+) = 5-aminolevulinate + CO2 + CoA. Its pathway is porphyrin-containing compound metabolism; protoporphyrin-IX biosynthesis; 5-aminolevulinate from glycine: step 1/1. Catalyzes the pyridoxal 5'-phosphate (PLP)-dependent condensation of succinyl-CoA and glycine to form aminolevulinic acid (ALA), with CoA and CO2 as by-products. The sequence is that of 5-aminolevulinate synthase, non-specific, mitochondrial (Alas1) from Rattus norvegicus (Rat).